Consider the following 215-residue polypeptide: NADH-quinone oxidoreductase subunit C (215 aa).

It belongs to the complex I 30 kDa subunit family. As to quaternary structure, NDH-1 is composed of 14 different subunits. Subunits NuoB, C, D, E, F, and G constitute the peripheral sector of the complex.

The protein localises to the cell inner membrane. The enzyme catalyses a quinone + NADH + 5 H(+)(in) = a quinol + NAD(+) + 4 H(+)(out). Its function is as follows. NDH-1 shuttles electrons from NADH, via FMN and iron-sulfur (Fe-S) centers, to quinones in the respiratory chain. The immediate electron acceptor for the enzyme in this species is believed to be ubiquinone. Couples the redox reaction to proton translocation (for every two electrons transferred, four hydrogen ions are translocated across the cytoplasmic membrane), and thus conserves the redox energy in a proton gradient. This is NADH-quinone oxidoreductase subunit C from Francisella philomiragia subsp. philomiragia (strain ATCC 25017 / CCUG 19701 / FSC 153 / O#319-036).